Reading from the N-terminus, the 167-residue chain is Putative universal stress protein SSP1056 (167 aa).

This sequence belongs to the universal stress protein A family.

The protein resides in the cytoplasm. The sequence is that of Putative universal stress protein SSP1056 from Staphylococcus saprophyticus subsp. saprophyticus (strain ATCC 15305 / DSM 20229 / NCIMB 8711 / NCTC 7292 / S-41).